The following is a 667-amino-acid chain: Protein OS-9 (667 aa).

The N-terminal stretch at 1 to 25 is a signal peptide; sequence MAAETLLSSLLGLLLLGLLLPASLT. Positions 108–230 constitute an MRH domain; that stretch reads APCLLKTKDW…TIRTPRLCPH (123 aa). Cysteine 110 and cysteine 123 are oxidised to a cystine. 3 residues coordinate a mannooligosaccharide derivative: tryptophan 117, tryptophan 118, and glutamine 130. Residue asparagine 177 is glycosylated (N-linked (GlcNAc...) asparagine). 2 disulfides stabilise this stretch: cysteine 181/cysteine 216 and cysteine 196/cysteine 228. Residues aspartate 182, arginine 188, glutamate 212, and tyrosine 218 each contribute to the a mannooligosaccharide derivative site. Disordered stretches follow at residues 284 to 355, 372 to 452, 464 to 483, 504 to 540, and 633 to 667; these read WSET…NNVQ, LKGG…RDRL, LENIIQETEKELDPDGLKKE, LEEKQSPELVKKHKKKRVVPKKPPPSPQPTEEDPEHR, and AQKERQRQKELESNYRRVWGSPGGEGTGDLDEFDF. Composition is skewed to basic and acidic residues over residues 302-311 and 396-412; these read TKDDSKDSDF and PQREPEKERGDPERQRE. Positions 413–429 are enriched in acidic residues; sequence MEEEEDEDEDEDEDEDE. Basic and acidic residues predominate over residues 430–452; that stretch reads RQLLGEFEKELEGILLPSDRDRL. Residues 504–513 show a composition bias toward basic and acidic residues; sequence LEEKQSPELV. A compositionally biased stretch (basic residues) spans 514 to 523; sequence KKHKKKRVVP. Residues 633-647 show a composition bias toward basic and acidic residues; it reads AQKERQRQKELESNY.

It belongs to the OS-9 family. As to quaternary structure, component of the HRD1 complex, which comprises at least SYNV1/HRD1, DERL1/2, FAM8A1, HERPUD1/HERP, OS9, SEL1L and UBE2J1. FAM8A1 is stabilized by interaction with SYNV1, which prevents its proteasomal degradation. OS9 and UBE2J1 recruitment to the complex may be mediated by SEL1L. Through this complex, may interact with ERLEC1 and HSPA5. Interacts (via C-terminus) with CPNE6 (via second C2 domain); this interaction occurs in a calcium-dependent manner in vitro. Interacts with CREB3. In terms of processing, intramolecular disulfide bonds. Isoform 1 and isoform 2 are N-glycosylated. In terms of tissue distribution, ubiquitously expressed. Found as well in all tumor cell lines analyzed, amplified in sarcomas. Highly expressed in osteosarcoma SJSA-1 and rhabdomyosarcoma Rh30 cell lines. As to expression, isoform 2 is the major isoform detected in all cell types examined.

The protein localises to the endoplasmic reticulum lumen. In terms of biological role, lectin component of the HRD1 complex, which functions in endoplasmic reticulum (ER) quality control and ER-associated degradation (ERAD). Specifically recognizes and binds improperly folded glycoproteins as well as hyperglycosylated proteins, retain them in the ER, and transfers them to the ubiquitination machinery and promote their degradation. Possible targets include TRPV4 as well as hyperglycosylated HSP90B1. The polypeptide is Protein OS-9 (OS9) (Homo sapiens (Human)).